A 384-amino-acid polypeptide reads, in one-letter code: Sphingosine 1-phosphate receptor 3 (384 aa).

Topologically, residues 1–34 are extracellular; the sequence is MMINPLIYLHYNYTGKLDHRPTVGTSPGTRDPKT. Residue Asn12 is glycosylated (N-linked (GlcNAc...) asparagine). A helical transmembrane segment spans residues 35-55; sequence IAFLVVCSFIILENLTVLLAI. The Cytoplasmic segment spans residues 56–64; it reads WKNHRFHNR. The helical transmembrane segment at 65 to 85 threads the bilayer; sequence MYFFIGNLALCDLLASVAYLV. The Extracellular segment spans residues 86 to 105; that stretch reads NLLLSGEKTLQLSPVLWFVR. The chain crosses the membrane as a helical span at residues 106–126; the sequence is EGSMFVTLGASIFSLLAIAIE. Over 127 to 144 the chain is Cytoplasmic; it reads RHLTMIKMRPYDASKNYR. Residues 145–165 form a helical membrane-spanning segment; that stretch reads VFLLIGTCWLVAVLLGALPIL. Residues 166–186 are Extracellular-facing; it reads GWNCLGNLPDCSTILPLYTKK. The chain crosses the membrane as a helical span at residues 187–207; the sequence is YVAFCIIVFIVLLLAMSVLYA. At 208–235 the chain is on the cytoplasmic side; the sequence is RIYILVKSSSQKVSKHRNSEHAMSLLRT. The helical transmembrane segment at 236–256 threads the bilayer; that stretch reads VIIVVGVFIACWMPIFVLLLL. The Extracellular portion of the chain corresponds to 257 to 271; the sequence is DVACERPCPILYKAD. The chain crosses the membrane as a helical span at residues 272 to 292; that stretch reads WFIAVAVLNSAMNPIIYTLAS. The Cytoplasmic segment spans residues 293 to 384; sequence REMRRAFLGL…REGEGGNGGR (92 aa). 2 stretches are compositionally biased toward polar residues: residues 315-325 and 336-347; these read NDSGNKQFQEP and QTHPNQSQQSSR. Positions 315-384 are disordered; it reads NDSGNKQFQE…REGEGGNGGR (70 aa). A compositionally biased stretch (basic and acidic residues) spans 349–359; it reads AELDREQETGH.

The protein belongs to the G-protein coupled receptor 1 family.

It is found in the cell membrane. In terms of biological role, receptor for the lysosphingolipid sphingosine 1-phosphate (S1P). This Takifugu rubripes (Japanese pufferfish) protein is Sphingosine 1-phosphate receptor 3 (s1pr3).